Reading from the N-terminus, the 626-residue chain is Fructose-1,6-bisphosphatase class 3 (626 aa).

Belongs to the FBPase class 3 family. Requires Mn(2+) as cofactor.

The enzyme catalyses beta-D-fructose 1,6-bisphosphate + H2O = beta-D-fructose 6-phosphate + phosphate. The protein operates within carbohydrate biosynthesis; gluconeogenesis. In Enterococcus faecalis (strain ATCC 700802 / V583), this protein is Fructose-1,6-bisphosphatase class 3.